A 116-amino-acid polypeptide reads, in one-letter code: uncharacterized protein (116 aa).

This is an uncharacterized protein from Invertebrate iridescent virus 6 (IIV-6).